Here is a 544-residue protein sequence, read N- to C-terminus: MDKNIKREIEIKRAKLLLLKNKENCTDAVSSSNKEGPKQISEDQLSNFLCKILKPTNLTPQTYSLESKSSNLVSDCELKISSVYQSYSSTFNVSNHVPSISKTVNIRETSKHLKHSTKAPKCSLPTSALEIDHLNNFLHSSAKILDRALCDQSNQLFTDYTVKKKSKKNKSQLEENGLNHLFTFQDEKITLNSVVNSISYSSFFEELLITSYAKPKEALRTRGLAIVWNQRWKNSPESVLKARSEITVCKPSPFHPQLIAGGAYNGQVFLWDLRQGQYPVSFTTIISGGHLEPVTDITYINNPPSNNIVTCSTDGLVHIWEPDMFSRPSETICLSSQVDSSSQCIPATCLSFIPENNMEFLVGAEDGKLQRGYRSDYSETKAVQPSNVSYEGHNVFISGIDVMTSNSQNVFLEKNKDFALTSSFDWTVRLWQCSPSRNQHELVPSNDLDEQVIINSCKTFTHKAMVFDVKWCVSEPCCFASVDALGNLNLWDLQKDVEAPVTSDIPDGKPLNKIAWQPEKRNLACGGLNGNVHIYKHLSPNLAN.

WD repeat units follow at residues 241 to 281, 289 to 330, 342 to 387, 402 to 441, 461 to 501, and 506 to 544; these read KARS…YPVS, GHLE…RPSE, SQCI…QPSN, VMTS…NQHE, THKA…EAPV, and PDGK…NLAN.

The protein belongs to the dynein intermediate chain family.

The protein resides in the cytoplasm. Has a role in meiotic nuclear divsion where it promotes the movement of 'horsetails'. In Schizosaccharomyces pombe (strain 972 / ATCC 24843) (Fission yeast), this protein is Dynein intermediate chain 1 (dic1).